Here is a 396-residue protein sequence, read N- to C-terminus: MSLSWWRAGAAKKRMDDDESLLVKQQQQQCVALIVGVTGLVGNSLAEMLPLPDTPGGPWKVYGVARRARPSWNEDQPMTYISCDVSNTGEVEAKLSPLSDVTHIFYATWTSRSTEEENCEANGKMLKNVLDAMIPNCPNLKHICLQTGRFHYVASVVDWKINGSHDTPLTEDLPRLKTNNFYYTQEDILLEEVKRKEGLTWSVHRPGTIFGFSPYSMMNLVGTLCVYAAICKQEGAVLRFPGCKGAWDGHSDCADADLIAEQQIWAALDPHAKNQAFNVSNGDLFKWKHLWKVLADQFGVECGDYEEGQQLRLQDVMKDKGPVWDKIVAENGLSNTKLEDVGKWWFSDTILWNECRLDSMNKSKEHGFLGFRNSKNCFLYWIHKVKAYNLVPSTYT.

NADP(+) is bound by residues Thr-38–Leu-40, Arg-66–Arg-67, Asp-84–Val-85, Thr-108–Trp-109, Gln-146, Tyr-182, Ile-209, and Ser-216–Met-218. Residue Tyr-182 is part of the active site.

This sequence belongs to the short-chain dehydrogenases/reductases (SDR) family.

It carries out the reaction (S)-8-oxocitronellyl enol + NADP(+) = (6E)-8-oxogeranial + NADPH + H(+). The enzyme catalyses (S)-8-oxocitronellyl enol + NAD(+) = (6E)-8-oxogeranial + NADH + H(+). In terms of biological role, iridoid synthase that catalyzes the first step in generation of the iridoid ring scaffold using the linear monoterpene (6E)-8-oxogeranial as substrate. Iridoids comprise a large family of distinctive bicyclic monoterpenes that possess a wide range of pharmacological activities, including anticancer, anti-inflammatory, antifungal and antibacterial activities. Catalyzes the conversion of the linear monoterpene (6E)-8-oxogeranial to (S)-8-oxocitronellyl enol, a precursor of nepetalactones, which are metabolites that are both insect-repellent and have euphoric effect in cats. The sequence is that of (S)-8-oxocitronellyl enol synthase ISY2 from Nepeta racemosa (Catmint).